Consider the following 955-residue polypeptide: Leucine--tRNA ligase (955 aa).

The 'HIGH' region signature appears at 66-77 (PYPSGSGLHVGH). The 'KMSKS' region signature appears at 725 to 729 (KMGKS). An ATP-binding site is contributed by Lys-728.

This sequence belongs to the class-I aminoacyl-tRNA synthetase family.

It localises to the cytoplasm. It catalyses the reaction tRNA(Leu) + L-leucine + ATP = L-leucyl-tRNA(Leu) + AMP + diphosphate. This is Leucine--tRNA ligase from Saccharopolyspora erythraea (strain ATCC 11635 / DSM 40517 / JCM 4748 / NBRC 13426 / NCIMB 8594 / NRRL 2338).